The primary structure comprises 101 residues: Gamma-secretase subunit PEN-2 (101 aa).

Residues Met1 to Lys17 lie on the Cytoplasmic side of the membrane. Residues Tyr18–Trp36 constitute an intramembrane region (helical). At Phe37–Val57 the chain is on the cytoplasmic side. The helical transmembrane segment at Trp58–Phe78 threads the bilayer. Residues Gln79–Pro101 are Lumenal-facing.

This sequence belongs to the PEN-2 family. As to quaternary structure, the functional gamma-secretase complex is composed of at least four polypeptides: a presenilin homodimer (PSEN1 or PSEN2), nicastrin (NCSTN), APH1 (APH1A or APH1B) and PSENEN.

Its subcellular location is the endoplasmic reticulum membrane. It is found in the golgi apparatus. The protein resides in the golgi stack membrane. The protein localises to the cell membrane. It localises to the membrane. In terms of biological role, essential subunit of the gamma-secretase complex, an endoprotease complex that catalyzes the intramembrane cleavage of integral membrane proteins such as Notch receptors and APP (amyloid-beta precursor protein). The gamma-secretase complex plays a role in Notch and Wnt signaling cascades and regulation of downstream processes via its role in processing key regulatory proteins, and by regulating cytosolic CTNNB1 levels. PSENEN modulates both endoproteolysis of presenilin and gamma-secretase activity. The sequence is that of Gamma-secretase subunit PEN-2 (PSENEN) from Bos taurus (Bovine).